The chain runs to 160 residues: Salivary gland broad-spectrum antiviral protein (160 aa).

A helical transmembrane segment spans residues 17-37 (VALGLYFTVVVFVLFITSVNL). Residues N62 and N145 are each glycosylated (N-linked (GlcNAc...) asparagine).

As to expression, salivary gland (at protein level).

It is found in the membrane. In terms of biological role, (Microbial infection) Modulates replication of Zika virus in salivary glands. Functionally, (Microbial infection) Modulates replication of dengue virus type 2 in salivary glands. Its function is as follows. (Microbial infection) Modulates replication of chikungunya virus in salivary glands. This chain is Salivary gland broad-spectrum antiviral protein, found in Aedes aegypti (Yellowfever mosquito).